A 300-amino-acid polypeptide reads, in one-letter code: MNLEVEIAGVKLKNPVIAASGTFGFGREYSKLIDISEFGAICTKGITLKKRNGNPQPRLCEVYGGIINSVGLENPGVEAFVNEELPFLKGFNTKIIANINGFTKEEFVELTKVLSSLVDMIEVNLSCPNVKEGGMVFGKDPEKVYEITKSVKDVASCPIIVKLTPNVTDIAQLAIAAEKAGADAISLINTVSAMAIDIETRKPLIKMVTGGLSGPAIKPIAVRMVYECFKKVRIPIVGMGGIMNYKDAIEFFIAGATAIQIGTVNFINPKAVCEIKEGIEAYLERKGFNSIKELVGNINI.

FMN contacts are provided by residues S20 and 44-45; that span reads KG. Substrate-binding positions include K44 and 68-72; that span reads NSVGL. FMN is bound by residues N98 and N124. Substrate is bound at residue N124. Catalysis depends on C127, which acts as the Nucleophile. Positions 162 and 188 each coordinate FMN. 189–190 serves as a coordination point for substrate; that stretch reads NT. Residues G214, 240 to 241, and 262 to 263 each bind FMN; these read GG and GT.

Belongs to the dihydroorotate dehydrogenase family. Type 1 subfamily. Heterotetramer of 2 PyrK and 2 PyrD type B subunits. FMN is required as a cofactor.

It is found in the cytoplasm. The enzyme catalyses (S)-dihydroorotate + NAD(+) = orotate + NADH + H(+). Its pathway is pyrimidine metabolism; UMP biosynthesis via de novo pathway; orotate from (S)-dihydroorotate (NAD(+) route): step 1/1. Functionally, catalyzes the conversion of dihydroorotate to orotate with NAD(+) as electron acceptor. The sequence is that of Dihydroorotate dehydrogenase B (NAD(+)), catalytic subunit (pyrD) from Caldicellulosiruptor saccharolyticus (strain ATCC 43494 / DSM 8903 / Tp8T 6331).